A 114-amino-acid polypeptide reads, in one-letter code: UPF0102 protein HPSH_02690 (114 aa).

The protein belongs to the UPF0102 family.

This is UPF0102 protein HPSH_02690 from Helicobacter pylori (strain Shi470).